The sequence spans 296 residues: NAD kinase (296 aa).

Asp72 acts as the Proton acceptor in catalysis. NAD(+)-binding positions include 72–73 (DG), 146–147 (ND), Arg157, Arg174, Asp176, 187–192 (TAYALS), and Gln247.

This sequence belongs to the NAD kinase family. The cofactor is a divalent metal cation.

The protein resides in the cytoplasm. The enzyme catalyses NAD(+) + ATP = ADP + NADP(+) + H(+). Functionally, involved in the regulation of the intracellular balance of NAD and NADP, and is a key enzyme in the biosynthesis of NADP. Catalyzes specifically the phosphorylation on 2'-hydroxyl of the adenosine moiety of NAD to yield NADP. The protein is NAD kinase of Hahella chejuensis (strain KCTC 2396).